The primary structure comprises 63 residues: Alpha-conotoxin-like PuSG1.1 (63 aa).

The signal sequence occupies residues 1–21 (MRCLAFLVVTLLLFTATATTG). Positions 22–43 (ASNGMNAAASGEAPDSISLAVR) are excised as a propeptide. 2 cysteine pairs are disulfide-bonded: Cys46-Cys52 and Cys47-Cys60. A lacks the Ser-Xaa-Pro motif that is crucial for potent interaction with nAChR region spans residues 48–50 (PDP).

Belongs to the conotoxin A superfamily. In terms of tissue distribution, expressed by the salivary gland.

The protein localises to the secreted. Alpha-conopeptides-like may act on postsynaptic membranes, they bind to the nicotinic acetylcholine receptors (nAChR) and thus inhibit them. Has possibly a distinct nAChR binding mode from other alpha-conotoxins, due to a different three residue motif (lacks the Ser-Xaa-Pro motif). The sequence is that of Alpha-conotoxin-like PuSG1.1 from Conus pulicarius (Flea-bitten cone).